The primary structure comprises 497 residues: tRNA-2-methylthio-N(6)-dimethylallyladenosine synthase (497 aa).

The span at 1–10 (MTLLDSDSRQ) shows a compositional bias: basic and acidic residues. The segment at 1–26 (MTLLDSDSRQSAEVLPAAGPAPDRPR) is disordered. The region spanning 26-142 (RTYQVRTFGC…LPVLLERARI (117 aa)) is the MTTase N-terminal domain. [4Fe-4S] cluster-binding residues include Cys-35, Cys-71, Cys-105, Cys-179, Cys-183, and Cys-186. The Radical SAM core domain maps to 165 to 395 (RESVYAAWVA…VALVEQIALE (231 aa)). The region spanning 398–464 (QAQVGRVVEV…PHCLIADQVL (67 aa)) is the TRAM domain.

It belongs to the methylthiotransferase family. MiaB subfamily. As to quaternary structure, monomer. It depends on [4Fe-4S] cluster as a cofactor.

It is found in the cytoplasm. The catalysed reaction is N(6)-dimethylallyladenosine(37) in tRNA + (sulfur carrier)-SH + AH2 + 2 S-adenosyl-L-methionine = 2-methylsulfanyl-N(6)-dimethylallyladenosine(37) in tRNA + (sulfur carrier)-H + 5'-deoxyadenosine + L-methionine + A + S-adenosyl-L-homocysteine + 2 H(+). Catalyzes the methylthiolation of N6-(dimethylallyl)adenosine (i(6)A), leading to the formation of 2-methylthio-N6-(dimethylallyl)adenosine (ms(2)i(6)A) at position 37 in tRNAs that read codons beginning with uridine. This Acidothermus cellulolyticus (strain ATCC 43068 / DSM 8971 / 11B) protein is tRNA-2-methylthio-N(6)-dimethylallyladenosine synthase.